Consider the following 531-residue polypeptide: Putative F-box protein At2g02890 (531 aa).

An F-box domain is found at 141–188 (RHSSSLTNDLIEEILSRLHSKSVARFRCVSKQCASMFASPYFKKLFQT).

This Arabidopsis thaliana (Mouse-ear cress) protein is Putative F-box protein At2g02890.